The primary structure comprises 360 residues: Pyrimidine monooxygenase RutA (360 aa).

FMN-binding positions include I49–K50, N115, E124, R140–Y141, and S190.

It belongs to the NtaA/SnaA/DszA monooxygenase family. RutA subfamily.

It catalyses the reaction uracil + FMNH2 + NADH + O2 = (Z)-3-ureidoacrylate + FMN + NAD(+) + H2O + H(+). The catalysed reaction is thymine + FMNH2 + NADH + O2 = (Z)-2-methylureidoacrylate + FMN + NAD(+) + H2O + H(+). Catalyzes the pyrimidine ring opening between N-3 and C-4 by an unusual flavin hydroperoxide-catalyzed mechanism, adding oxygen atoms in the process to yield ureidoacrylate peracid, that immediately reacts with FMN forming ureidoacrylate and FMN-N(5)-oxide. The FMN-N(5)-oxide reacts spontaneously with NADH to produce FMN. Requires the flavin reductase RutF to regenerate FMN in vivo. The sequence is that of Pyrimidine monooxygenase RutA from Pseudomonas savastanoi pv. phaseolicola (strain 1448A / Race 6) (Pseudomonas syringae pv. phaseolicola (strain 1448A / Race 6)).